The sequence spans 148 residues: Probable glucosamine 6-phosphate N-acetyltransferase (148 aa).

The N-acetyltransferase domain maps to 3–148 (ISINELNFDD…KQMALYLNGK (146 aa)). Substrate contacts are provided by residues T25, 72 to 75 (KFIH), and 84 to 86 (EDV). Acetyl-CoA contacts are provided by residues 86–88 (VVV) and 94–99 (LHGIGK). Residues 115-116 (YK) and D120 contribute to the substrate site. Position 129–131 (129–131 (YCK)) interacts with acetyl-CoA. E138 is a substrate binding site.

This sequence belongs to the acetyltransferase family. GNA1 subfamily.

The enzyme catalyses D-glucosamine 6-phosphate + acetyl-CoA = N-acetyl-D-glucosamine 6-phosphate + CoA + H(+). It participates in nucleotide-sugar biosynthesis; UDP-N-acetyl-alpha-D-glucosamine biosynthesis; N-acetyl-alpha-D-glucosamine 1-phosphate from alpha-D-glucosamine 6-phosphate (route I): step 1/2. The polypeptide is Probable glucosamine 6-phosphate N-acetyltransferase (Acanthamoeba polyphaga (Amoeba)).